We begin with the raw amino-acid sequence, 428 residues long: Enolase (428 aa).

A (2R)-2-phosphoglycerate-binding site is contributed by Gln-163. Glu-205 serves as the catalytic Proton donor. Positions 242, 285, and 312 each coordinate Mg(2+). 4 residues coordinate (2R)-2-phosphoglycerate: Lys-337, Arg-366, Ser-367, and Lys-388. Lys-337 (proton acceptor) is an active-site residue.

This sequence belongs to the enolase family. Requires Mg(2+) as cofactor.

It is found in the cytoplasm. The protein resides in the secreted. It localises to the cell surface. The enzyme catalyses (2R)-2-phosphoglycerate = phosphoenolpyruvate + H2O. Its pathway is carbohydrate degradation; glycolysis; pyruvate from D-glyceraldehyde 3-phosphate: step 4/5. Functionally, catalyzes the reversible conversion of 2-phosphoglycerate (2-PG) into phosphoenolpyruvate (PEP). It is essential for the degradation of carbohydrates via glycolysis. The chain is Enolase from Novosphingobium aromaticivorans (strain ATCC 700278 / DSM 12444 / CCUG 56034 / CIP 105152 / NBRC 16084 / F199).